The following is a 209-amino-acid chain: NDR1/HIN1-like protein 1 (209 aa).

The chain crosses the membrane as a helical span at residues I18–A38. N58 carries N-linked (GlcNAc...) asparagine glycosylation.

Expressed in rosette leaves, cauline leaves, stems, and siliques, and at lower levels in roots and flowers.

It is found in the cell membrane. In terms of biological role, may play a role in plant immunity. This chain is NDR1/HIN1-like protein 1, found in Arabidopsis thaliana (Mouse-ear cress).